A 256-amino-acid polypeptide reads, in one-letter code: UPF0280 protein MTH_727 (256 aa).

Belongs to the UPF0280 family.

This is UPF0280 protein MTH_727 from Methanothermobacter thermautotrophicus (strain ATCC 29096 / DSM 1053 / JCM 10044 / NBRC 100330 / Delta H) (Methanobacterium thermoautotrophicum).